We begin with the raw amino-acid sequence, 248 residues long: ATP synthase subunit a, chloroplastic (248 aa).

5 consecutive transmembrane segments (helical) span residues 38 to 58 (QVLI…AIAV), 96 to 116 (VPFI…GALL), 135 to 155 (INTT…AGLT), 200 to 220 (LVVV…VMFL), and 221 to 241 (GLFT…AYIG).

This sequence belongs to the ATPase A chain family. As to quaternary structure, F-type ATPases have 2 components, CF(1) - the catalytic core - and CF(0) - the membrane proton channel. CF(1) has five subunits: alpha(3), beta(3), gamma(1), delta(1), epsilon(1). CF(0) has four main subunits: a, b, b' and c.

It localises to the plastid. It is found in the chloroplast thylakoid membrane. In terms of biological role, key component of the proton channel; it plays a direct role in the translocation of protons across the membrane. The chain is ATP synthase subunit a, chloroplastic from Nymphaea alba (White water-lily).